We begin with the raw amino-acid sequence, 218 residues long: Alkylmercury lyase (218 aa).

Belongs to the MerB family.

It catalyses the reaction an alkylmercury + H(+) = an alkane + Hg(2+). Functionally, cleaves the carbon-mercury bond of organomercurials such as phenylmercuric acetate. One product is Hg(2+), which is subsequently detoxified by the mercuric reductase. This is Alkylmercury lyase (merB1) from Bacillus cereus.